The following is a 362-amino-acid chain: Microfibril-associated glycoprotein 3 (362 aa).

The first 19 residues, 1–19, serve as a signal peptide directing secretion; sequence MKLHCCLFTLVASIIVPAA. Topologically, residues 20-146 are extracellular; that stretch reads FVLEDVDFNQ…TLRVIFTSGD (127 aa). N-linked (GlcNAc...) asparagine glycosylation is found at Asn36, Asn41, and Asn110. Positions 45–137 constitute an Ig-like C2-type domain; that stretch reads PSSFELSASS…SPIRASYSVT (93 aa). Cys73 and Cys124 are disulfide-bonded. The chain crosses the membrane as a helical span at residues 147–167; it reads MSVYYMIVCLIAFTITLILNV. At 168-362 the chain is on the cytoplasmic side; sequence TRLCMMSSHL…KDGAYENSQL (195 aa). Disordered stretches follow at residues 282–306 and 319–362; these read GIYV…GSLN and HLQS…NSQL. Residues 319 to 337 are compositionally biased toward polar residues; it reads HLQSETKSIDTESQGSSHF.

In terms of processing, glycosylated.

The protein localises to the cell membrane. Component of the elastin-associated microfibrils. This chain is Microfibril-associated glycoprotein 3 (MFAP3), found in Pongo abelii (Sumatran orangutan).